The sequence spans 455 residues: Cerebellar degeneration-related protein 2 (455 aa).

Coiled coils occupy residues Leu-37–Gly-141 and Glu-191–His-264. Residues Val-132–Arg-142 are compositionally biased toward polar residues. The tract at residues Val-132–Lys-152 is disordered. Ser-310 bears the Phosphoserine mark. The segment at Ser-395–Pro-419 is disordered. A compositionally biased stretch (low complexity) spans Glu-403–Pro-419.

Belongs to the CDR2 family. In terms of tissue distribution, expressed in brain and testis (at protein level). Expressed in the cerebellum, cerebral cortex, heart, lung, spleen, ovary, kidney and testis.

The polypeptide is Cerebellar degeneration-related protein 2 (Cdr2) (Mus musculus (Mouse)).